Reading from the N-terminus, the 199-residue chain is DnaJ homolog subfamily C member 5B (199 aa).

Serine 14 and serine 16 each carry phosphoserine. The 66-residue stretch at 19–84 (SLYEILGLHK…SKRNIYDKYG (66 aa)) folds into the J domain.

In terms of assembly, interacts with the chaperone complex consisting of HSC70 and SGTA. In terms of processing, palmitoylated.

Its subcellular location is the membrane. In Mus musculus (Mouse), this protein is DnaJ homolog subfamily C member 5B (Dnajc5b).